The chain runs to 574 residues: Proline--tRNA ligase (574 aa).

The protein belongs to the class-II aminoacyl-tRNA synthetase family. ProS type 1 subfamily. Homodimer.

The protein localises to the cytoplasm. The enzyme catalyses tRNA(Pro) + L-proline + ATP = L-prolyl-tRNA(Pro) + AMP + diphosphate. Functionally, catalyzes the attachment of proline to tRNA(Pro) in a two-step reaction: proline is first activated by ATP to form Pro-AMP and then transferred to the acceptor end of tRNA(Pro). As ProRS can inadvertently accommodate and process non-cognate amino acids such as alanine and cysteine, to avoid such errors it has two additional distinct editing activities against alanine. One activity is designated as 'pretransfer' editing and involves the tRNA(Pro)-independent hydrolysis of activated Ala-AMP. The other activity is designated 'posttransfer' editing and involves deacylation of mischarged Ala-tRNA(Pro). The misacylated Cys-tRNA(Pro) is not edited by ProRS. The sequence is that of Proline--tRNA ligase from Desulfovibrio desulfuricans (strain ATCC 27774 / DSM 6949 / MB).